The primary structure comprises 443 residues: ATP-dependent protease ATPase subunit HslU (443 aa).

ATP contacts are provided by residues I20, G62 to E67, D255, E321, and R393.

This sequence belongs to the ClpX chaperone family. HslU subfamily. A double ring-shaped homohexamer of HslV is capped on each side by a ring-shaped HslU homohexamer. The assembly of the HslU/HslV complex is dependent on binding of ATP.

It localises to the cytoplasm. Functionally, ATPase subunit of a proteasome-like degradation complex; this subunit has chaperone activity. The binding of ATP and its subsequent hydrolysis by HslU are essential for unfolding of protein substrates subsequently hydrolyzed by HslV. HslU recognizes the N-terminal part of its protein substrates and unfolds these before they are guided to HslV for hydrolysis. This Helicobacter pylori (strain HPAG1) protein is ATP-dependent protease ATPase subunit HslU.